Consider the following 147-residue polypeptide: Large ribosomal subunit protein uL13 (147 aa).

The protein belongs to the universal ribosomal protein uL13 family. Part of the 50S ribosomal subunit.

In terms of biological role, this protein is one of the early assembly proteins of the 50S ribosomal subunit, although it is not seen to bind rRNA by itself. It is important during the early stages of 50S assembly. The chain is Large ribosomal subunit protein uL13 from Rhodococcus erythropolis (strain PR4 / NBRC 100887).